A 376-amino-acid chain; its full sequence is Nuclear egress protein 1 (376 aa).

Phosphoserine is present on Ser19. Residues 22-57 form a disordered region; it reads RKRRQRELASKVASTVNGATSANNHGEPPSPADARP. Residues 33 to 45 show a composition bias toward polar residues; it reads VASTVNGATSANN. A CCCH-type zinc finger spans residues 106–211; that stretch reads CLDISPYGNE…HVIFENPDVH (106 aa). Residues 316–376 are disordered; that stretch reads VVSTNGCGPS…PLFLNSIRAP (61 aa). A compositionally biased stretch (polar residues) spans 317 to 332; that stretch reads VSTNGCGPSSSSQSTP.

Belongs to the herpesviridae NEC1 protein family. As to quaternary structure, forms a heterohexameric complex with NEC2. Interacts with capsid vertex specific component 2/CVC2; this interaction directs the capsid to the host inner nuclear membrane to initiate budding. Phosphorylated at serine residues in the N-terminus. This phosphorylation regulates the localization within the inner nuclear membrane. Phosphorylation by viral kinase UL97 at Ser-19 plays an important role for correct viral nuclear egress complex (NEC) localization.

The protein localises to the host nucleus inner membrane. Its function is as follows. Plays an essential role in virion nuclear egress, the first step of virion release from infected cell. Within the host nucleus, NEC1 interacts with the newly formed capsid through the vertexes and directs it to the inner nuclear membrane by associating with NEC2. Induces the budding of the capsid at the inner nuclear membrane as well as its envelopment into the perinuclear space. There, the NEC1/NEC2 complex promotes the fusion of the enveloped capsid with the outer nuclear membrane and the subsequent release of the viral capsid into the cytoplasm where it will reach the secondary budding sites in the host Golgi or trans-Golgi network. This is Nuclear egress protein 1 from Homo sapiens (Human).